The primary structure comprises 516 residues: 2-isopropylmalate synthase (516 aa).

A Pyruvate carboxyltransferase domain is found at 5 to 268 (LIIFDTTLRD…DLGIDTTQIV (264 aa)). The Mn(2+) site is built by D14, H202, H204, and N239. A regulatory domain region spans residues 395-516 (KFVSLSQHSE…DKLNPQRADI (122 aa)).

This sequence belongs to the alpha-IPM synthase/homocitrate synthase family. LeuA type 1 subfamily. As to quaternary structure, homodimer. Mn(2+) serves as cofactor.

It localises to the cytoplasm. The enzyme catalyses 3-methyl-2-oxobutanoate + acetyl-CoA + H2O = (2S)-2-isopropylmalate + CoA + H(+). The protein operates within amino-acid biosynthesis; L-leucine biosynthesis; L-leucine from 3-methyl-2-oxobutanoate: step 1/4. Its function is as follows. Catalyzes the condensation of the acetyl group of acetyl-CoA with 3-methyl-2-oxobutanoate (2-ketoisovalerate) to form 3-carboxy-3-hydroxy-4-methylpentanoate (2-isopropylmalate). This is 2-isopropylmalate synthase from Paraburkholderia phymatum (strain DSM 17167 / CIP 108236 / LMG 21445 / STM815) (Burkholderia phymatum).